The primary structure comprises 689 residues: Solute carrier family 22 member 23 (689 aa).

Disordered stretches follow at residues 1–55 (MAID…PLPA) and 162–188 (TASW…GKGN). N24 carries N-linked (GlcNAc...) asparagine glycosylation. The span at 165–177 (WGTTSNRSNSSDT) shows a compositional bias: polar residues. A run of 2 helical transmembrane segments spans residues 229-249 (FSLL…ADWV) and 253-273 (PVLL…ALSV). A glycan (N-linked (GlcNAc...) asparagine) is linked at N274. Helical transmembrane passes span 283–303 (FFEG…RIEL), 310–330 (FIIT…MPGL), 339–359 (VLQA…SIFP), 462–482 (ADYY…CLVV), 489–509 (GGLL…LGLL), 541–561 (IAFS…SVFF), 572–592 (CGGL…APII), and 601–621 (FLHH…ILLL).

The protein belongs to the major facilitator (TC 2.A.1) superfamily. Organic cation transporter (TC 2.A.1.19) family. In terms of tissue distribution, expressed in many tissues, including brain, spinal cord, kidney, liver, eye, adipose tissue, lung, epididymis, adrenal gland, pineal gland, skeletal muscle, heart, spleen, thymus, ovary, uterus, testis and epididymis.

It localises to the membrane. The protein is Solute carrier family 22 member 23 (Slc22a23) of Rattus norvegicus (Rat).